The sequence spans 511 residues: Histidine ammonia-lyase (511 aa).

The segment at residues 143 to 145 (ASG) is a cross-link (5-imidazolinone (Ala-Gly)). Ser144 is modified (2,3-didehydroalanine (Ser)).

This sequence belongs to the PAL/histidase family. Post-translationally, contains an active site 4-methylidene-imidazol-5-one (MIO), which is formed autocatalytically by cyclization and dehydration of residues Ala-Ser-Gly.

It is found in the cytoplasm. It carries out the reaction L-histidine = trans-urocanate + NH4(+). It functions in the pathway amino-acid degradation; L-histidine degradation into L-glutamate; N-formimidoyl-L-glutamate from L-histidine: step 1/3. The polypeptide is Histidine ammonia-lyase (Idiomarina loihiensis (strain ATCC BAA-735 / DSM 15497 / L2-TR)).